The following is a 225-amino-acid chain: Claudin-8 (225 aa).

Over 1–7 the chain is Cytoplasmic; it reads MATYALQ. Residues 8–28 traverse the membrane as a helical segment; the sequence is MAALVLGGVGMVGTVAVTIMP. Residues 29 to 81 lie on the Extracellular side of the membrane; it reads QWRVSAFIESNIVVFENRWEGLWMNCMRHANIRMQCKVYDSLLALSPDLQASR. Residues 82-102 traverse the membrane as a helical segment; it reads GLMCAASVLAFLAFMTAILGM. Over 103–117 the chain is Cytoplasmic; it reads KCTRCTGDDENVKSR. Residues 118–138 form a helical membrane-spanning segment; it reads ILLTAGIIFFITGLVVLIPVS. The Extracellular portion of the chain corresponds to 139–166; it reads WVANSIIRDFYNPLVDVALKRELGEALY. A helical membrane pass occupies residues 167-187; that stretch reads IGWTTALVLIAGGALFCCVFC. At 188 to 225 the chain is on the cytoplasmic side; the sequence is CTERSNSYRYSVPSHRTTQRSFHAEKRSPSIYSKSQYV. Lys213 is covalently cross-linked (Glycyl lysine isopeptide (Lys-Gly) (interchain with G-Cter in ubiquitin)). An interactions with TJP1, TJP2 and TJP3 region spans residues 224 to 225; the sequence is YV.

The protein belongs to the claudin family. As to quaternary structure, can form heteropolymeric strands with other claudins. Interacts with CLDN4. Directly interacts with TJP1/ZO-1, TJP2/ZO-2 and TJP3/ZO-3. Interacts with KLHL3. In terms of processing, ubiquitinated by the BCR(KLHL3) E3 ubiquitin ligase complex in the kidney, leading to its degradation. In terms of tissue distribution, expressed primarily in lung and kidney. Present in both cortical and medullar collecting ducts (at protein level).

The protein resides in the cell junction. It is found in the tight junction. It localises to the cell membrane. It catalyses the reaction chloride(in) = chloride(out). The enzyme catalyses bromide(in) = bromide(out). The catalysed reaction is iodide(out) = iodide(in). It carries out the reaction fluoride(in) = fluoride(out). Its function is as follows. Can associate with other claudins to regulate tight junction structural and functional strand dynamics. May coassemble with CLDN4 into tight junction strands containing anion-selective channels that convey paracellular chloride permeability in renal collecting ducts. Cannot form tight junction strands on its own. The polypeptide is Claudin-8 (Mus musculus (Mouse)).